A 208-amino-acid chain; its full sequence is ATP-dependent Clp protease proteolytic subunit (208 aa).

Serine 98 (nucleophile) is an active-site residue. The active site involves histidine 123.

It belongs to the peptidase S14 family. Fourteen ClpP subunits assemble into 2 heptameric rings which stack back to back to give a disk-like structure with a central cavity, resembling the structure of eukaryotic proteasomes.

Its subcellular location is the cytoplasm. It carries out the reaction Hydrolysis of proteins to small peptides in the presence of ATP and magnesium. alpha-casein is the usual test substrate. In the absence of ATP, only oligopeptides shorter than five residues are hydrolyzed (such as succinyl-Leu-Tyr-|-NHMec, and Leu-Tyr-Leu-|-Tyr-Trp, in which cleavage of the -Tyr-|-Leu- and -Tyr-|-Trp bonds also occurs).. Functionally, cleaves peptides in various proteins in a process that requires ATP hydrolysis. Has a chymotrypsin-like activity. Plays a major role in the degradation of misfolded proteins. This is ATP-dependent Clp protease proteolytic subunit from Wolbachia sp. subsp. Drosophila simulans (strain wRi).